The primary structure comprises 257 residues: Large ribosomal subunit protein bL28m (257 aa).

The transit peptide at 1–55 directs the protein to the mitochondrion; the sequence is MPLHRYPVHLWQKLRLRQGICARLPAHFLRSLEEERTPTPVHYKPHGTKFKINPK.

It belongs to the bacterial ribosomal protein bL28 family. As to quaternary structure, component of the mitochondrial ribosome large subunit (39S) which comprises a 16S rRNA and about 50 distinct proteins. Interacts with OXA1L.

The protein resides in the mitochondrion. This chain is Large ribosomal subunit protein bL28m (Mrpl28), found in Mus musculus (Mouse).